The chain runs to 312 residues: Calcium-independent mitochondrial carrier protein SCaMC-3L (312 aa).

Solcar repeat units follow at residues 27 to 113 (GTLW…SKNF), 121 to 206 (QLFQ…LQCL), and 217 to 304 (PSGL…MKKT). 6 helical membrane passes run 33–50 (LLSG…TAPL), 88–107 (GNGI…FSVC), 131–144 (SLAV…INPM), 182–200 (YLPN…LAVY), 219–243 (GLVS…LTLV), and 279–298 (GMTP…YLVY).

It belongs to the mitochondrial carrier (TC 2.A.29) family. As to expression, mainly expressed in testis and at lesser levels in brain.

Its subcellular location is the mitochondrion inner membrane. It catalyses the reaction Mg(2+)(out) + phosphate(in) + ATP(out) = Mg(2+)(in) + phosphate(out) + ATP(in). It carries out the reaction ADP(out) + phosphate(in) + H(+)(out) = ADP(in) + phosphate(out) + H(+)(in). Calcium-independent ATP-Mg/Pi exchanger that catalyzes the electroneutral exchange of Mg-ATP or free ADP against an hydrogenphosphate and participates in the net transport of adenine nucleotides across the mitochondria inner membrane. In Mus musculus (Mouse), this protein is Calcium-independent mitochondrial carrier protein SCaMC-3L.